Here is a 98-residue protein sequence, read N- to C-terminus: Integration host factor subunit alpha (98 aa).

A disordered region spans residues 52 to 71 (FDLRDKNQRPGRNPKTGEDI).

This sequence belongs to the bacterial histone-like protein family. As to quaternary structure, heterodimer of an alpha and a beta chain.

Its function is as follows. This protein is one of the two subunits of integration host factor, a specific DNA-binding protein that functions in genetic recombination as well as in transcriptional and translational control. The polypeptide is Integration host factor subunit alpha (Photorhabdus laumondii subsp. laumondii (strain DSM 15139 / CIP 105565 / TT01) (Photorhabdus luminescens subsp. laumondii)).